The following is a 412-amino-acid chain: DNA primase DnaG (412 aa).

A Toprim domain is found at 165 to 243 (PELIIVEGRA…KLDYVARAPT (79 aa)). Mg(2+) contacts are provided by Glu-171, Asp-216, and Asp-218.

Belongs to the archaeal DnaG primase family. In terms of assembly, forms a ternary complex with MCM helicase and DNA. Component of the archaeal exosome complex. Mg(2+) is required as a cofactor.

The catalysed reaction is ssDNA + n NTP = ssDNA/pppN(pN)n-1 hybrid + (n-1) diphosphate.. Functionally, RNA polymerase that catalyzes the synthesis of short RNA molecules used as primers for DNA polymerase during DNA replication. Also part of the exosome, which is a complex involved in RNA degradation. Acts as a poly(A)-binding protein that enhances the interaction between heteromeric, adenine-rich transcripts and the exosome. This chain is DNA primase DnaG, found in Sulfolobus acidocaldarius (strain ATCC 33909 / DSM 639 / JCM 8929 / NBRC 15157 / NCIMB 11770).